Reading from the N-terminus, the 1080-residue chain is Putative bifunctional amine oxidase DDB_G0291301 (1080 aa).

The interval M1–N450 is putative sarcosine oxidase. D10–S40 is a binding site for FAD. Positions S445 to T464 are disordered. Residues N450 to K1080 are putative L-amino-acid oxidase. A helical membrane pass occupies residues V508–G528. FAD is bound by residues E535, R544, and G563–A564. Position 886 (Y886) interacts with substrate. Residues E978 and V987–S990 each bind FAD.

In the N-terminal section; belongs to the MSOX/MTOX family. This sequence in the C-terminal section; belongs to the flavin monoamine oxidase family. FAD is required as a cofactor.

The protein localises to the membrane. The catalysed reaction is sarcosine + O2 + H2O = formaldehyde + glycine + H2O2. It catalyses the reaction L-pipecolate + O2 = L-1-piperideine-6-carboxylate + H2O2 + H(+). The enzyme catalyses an L-alpha-amino acid + O2 + H2O = a 2-oxocarboxylate + H2O2 + NH4(+). Catalyzes an oxidative deamination of predominantly hydrophobic and aromatic L-amino acids. Metabolizes sarcosine, L-pipecolic acid and L-proline. This is Putative bifunctional amine oxidase DDB_G0291301 from Dictyostelium discoideum (Social amoeba).